The chain runs to 106 residues: 10 kDa heat shock protein, mitochondrial (106 aa).

At serine 2 the chain carries N-acetylserine. Serine 31 carries the post-translational modification Phosphoserine.

This sequence belongs to the GroES chaperonin family. In terms of assembly, homohexamer. In terms of processing, the N-terminus is blocked.

The protein resides in the mitochondrion matrix. Functionally, eukaryotic CPN10 homolog which is essential for mitochondrial protein biogenesis, together with CPN60. Binds to CPN60 in the presence of Mg-ATP and suppresses the ATPase activity of the latter. This Saccharomyces cerevisiae (strain ATCC 204508 / S288c) (Baker's yeast) protein is 10 kDa heat shock protein, mitochondrial (HSP10).